A 283-amino-acid chain; its full sequence is Pantothenate synthetase (283 aa).

Residue 30–37 (MGNLHDGH) coordinates ATP. The active-site Proton donor is the His37. Gln61 is a binding site for (R)-pantoate. Gln61 serves as a coordination point for beta-alanine. 149-152 (GEKD) is a binding site for ATP. Gln155 provides a ligand contact to (R)-pantoate. Position 186-189 (186-189 (LSSR)) interacts with ATP.

Belongs to the pantothenate synthetase family. As to quaternary structure, homodimer.

It is found in the cytoplasm. The catalysed reaction is (R)-pantoate + beta-alanine + ATP = (R)-pantothenate + AMP + diphosphate + H(+). Its pathway is cofactor biosynthesis; (R)-pantothenate biosynthesis; (R)-pantothenate from (R)-pantoate and beta-alanine: step 1/1. In terms of biological role, catalyzes the condensation of pantoate with beta-alanine in an ATP-dependent reaction via a pantoyl-adenylate intermediate. This is Pantothenate synthetase from Escherichia coli (strain ATCC 8739 / DSM 1576 / NBRC 3972 / NCIMB 8545 / WDCM 00012 / Crooks).